A 761-amino-acid polypeptide reads, in one-letter code: Probable ATP-dependent RNA helicase DDX20 (761 aa).

The Q motif motif lies at 26 to 54 (VEFSSLLLSKPVLEGLSASGFQRPSPIQL). ATP-binding positions include arginine 48, glutamine 53, 70–77 (AKSGTGKT), and 73–78 (GTGKTC). The 175-residue stretch at 57-231 (IPLGRCGLDL…SRYMREPTFV (175 aa)) folds into the Helicase ATP-binding domain. The DEAD box motif lies at 175–178 (DEAD). The 150-residue stretch at 266 to 415 (SLLELFSKIP…PIPPGIMEEA (150 aa)) folds into the Helicase C-terminal domain. Disordered stretches follow at residues 428–525 (PKIP…KSHT) and 570–720 (HDAH…EAGQ). Residues 443–456 (KSEQMKSKPSRESH) are compositionally biased toward basic and acidic residues. Residues 498–512 (QHDSTITQKQQNNTL) show a composition bias toward polar residues. 2 stretches are compositionally biased toward low complexity: residues 600 to 613 (SELS…SESS) and 623 to 635 (ESSS…STLE). A compositionally biased stretch (polar residues) spans 655–679 (TLPSTRVPQQATRSKQKPCQPQSQD). Positions 683 to 707 (HHNLPHKHRTASKSSRRPTGPKRRT) are enriched in basic residues.

This sequence belongs to the DEAD box helicase family. DDX20 subfamily. As to quaternary structure, part of the core SMN complex.

It localises to the cytoplasm. The protein localises to the nucleus. The enzyme catalyses ATP + H2O = ADP + phosphate + H(+). It catalyses the reaction a ribonucleoside 5'-triphosphate + H2O = a ribonucleoside 5'-diphosphate + phosphate + H(+). The SMN complex catalyzes the assembly of small nuclear ribonucleoproteins (snRNPs), the building blocks of the spliceosome, and thereby plays an important role in the splicing of cellular pre-mRNAs. Most spliceosomal snRNPs contain a common set of Sm proteins SNRPB, SNRPD1, SNRPD2, SNRPD3, SNRPE, SNRPF and SNRPG that assemble in a heptameric protein ring on the Sm site of the small nuclear RNA to form the core snRNP (Sm core). In the cytosol, the Sm proteins SNRPD1, SNRPD2, SNRPE, SNRPF and SNRPG are trapped in an inactive 6S pICln-Sm complex by the chaperone CLNS1A that controls the assembly of the core snRNP. To assemble core snRNPs, the SMN complex accepts the trapped 5Sm proteins from CLNS1A forming an intermediate. Binding of snRNA inside 5Sm triggers eviction of the SMN complex, thereby allowing binding of SNRPD3 and SNRPB to complete assembly of the core snRNP. May also play a role in the metabolism of small nucleolar ribonucleoprotein (snoRNPs). This is Probable ATP-dependent RNA helicase DDX20 (ddx20) from Danio rerio (Zebrafish).